The primary structure comprises 190 residues: MTRSQKEKMLAGEMYNAADPEIQAELLLTGAWLKRYNDTLGDSAERWNGLLLERLGAVGLGAVIRPPFHCDYGFNIRIGAWVYINYNCVILDVAAVTIGDGTAIGPAVQIYTADHPHDPEQRQAGLQLGRPVSIGRHAWIGGGAIILPGVTIGDHAVIGAGSVVTRDVPAGSTAMGNPARVKAGGRLPKS.

This sequence belongs to the transferase hexapeptide repeat family.

Acetyltransferase implicated in the O-acetylation of Nod factors. This Rhizobium leguminosarum bv. viciae protein is Nodulation protein L (nodL).